The following is a 2569-amino-acid chain: Highly reducing polyketide synthase pks5 (2569 aa).

Residues 1 to 25 (MVVKFANGVRNRGNGDEGQRGTQRP) are disordered. The 426-residue stretch at 27–452 (STPIAIVGMS…GTNVHVIMEA (426 aa)) folds into the Ketosynthase family 3 (KS3) domain. Catalysis depends on for beta-ketoacyl synthase activity residues Cys-200, His-335, and His-375. A malonyl-CoA:ACP transacylase (MAT) domain region spans residues 572–892 (IFNGQGAQWY…PYLSCLRRNI (321 aa)). Residues 960-1097 (HELLGSSVPG…GYVSAEDSSK (138 aa)) are N-terminal hotdog fold. Residues 960–1268 (HELLGSSVPG…LRLQKIQAED (309 aa)) are dehydratase (DH) domain. Residues 960 to 1270 (HELLGSSVPG…LQKIQAEDDN (311 aa)) form the PKS/mFAS DH domain. His-992 (proton acceptor; for dehydratase activity) is an active-site residue. The segment at 1117-1270 (RVRHVRPDAM…LQKIQAEDDN (154 aa)) is C-terminal hotdog fold. Asp-1179 (proton donor; for dehydratase activity) is an active-site residue. A methyltransferase (CMet) domain region spans residues 1457 to 1567 (LEVGAGTGGA…RKLLKPKGKL (111 aa)). Residues 1855 to 2170 (DLLNKIEFLE…SGTHMGKIVL (316 aa)) form an enoyl reductase (ER) domain region. Residues 2195–2371 (THLIVGGLRG…AISINLGPVD (177 aa)) are ketoreductase (KR) domain. Positions 2485 to 2562 (AARKLVSELI…DFAALVASRS (78 aa)) constitute a Carrier domain. Ser-2522 is subject to O-(pantetheine 4'-phosphoryl)serine.

Highly reducing polyketide synthase; part of the gene cluster that mediates the biosynthesis of abscisic acid (ABA), a phytohormone that acts antagonistically toward salicylic acid (SA), jasmonic acid (JA) and ethylene (ETH) signaling, to impede plant defense responses. The first step of the pathway catalyzes the reaction from farnesyl diphosphate to alpha-ionylideneethane performed by the alpha-ionylideneethane synthase abl3 via a three-step reaction mechanism involving 2 neutral intermediates, beta-farnesene and allofarnesene. The cytochrome P450 monooxygenase abl1 might then be involved in the conversion of alpha-ionylideneethane to alpha-ionylideneacetic acid. Alpha-ionylideneacetic acid is further converted to abscisic acid in 2 steps involving the cytochrome P450 monooxygenase abl2 and the short-chain dehydrogenase/reductase abl4, via the intermediates 1'-deoxy-ABA or 1',4'-trans-diol-ABA, depending on the order of action of these 2 enzymes. Abl2 is responsible for the hydroxylation of carbon atom C-1' and abl4 might be involved in the oxidation of the C-4' carbon atom. Pks5 is clearly not involved in the production of ABA. Nonetheless, the possibility cannot be excluded that pks5 may modify ABA into another compound. It also cannot be excluded the possibility that pks5 also has a function completely independent of ABA synthesis. Pks5 is not required for pathogenicity on B.napus cotyledon. The sequence is that of Highly reducing polyketide synthase pks5 from Leptosphaeria maculans (strain JN3 / isolate v23.1.3 / race Av1-4-5-6-7-8) (Blackleg fungus).